The following is a 660-amino-acid chain: Bifunctional polymyxin resistance protein ArnA (660 aa).

The segment at methionine 1–leucine 304 is formyltransferase ArnAFT. The Proton donor; for formyltransferase activity role is filled by histidine 104. (6R)-10-formyltetrahydrofolate is bound by residues arginine 114 and valine 136–aspartate 140. A dehydrogenase ArnADH region spans residues arginine 314 to serine 660. NAD(+)-binding positions include aspartate 347 and aspartate 368 to isoleucine 369. UDP-alpha-D-glucuronate-binding positions include alanine 393, tyrosine 398, and threonine 432–serine 433. Glutamate 434 (proton acceptor; for decarboxylase activity) is an active-site residue. Residues arginine 460, asparagine 492, lysine 526–arginine 535, and tyrosine 613 contribute to the UDP-alpha-D-glucuronate site. Residue arginine 619 is the Proton donor; for decarboxylase activity of the active site.

This sequence in the N-terminal section; belongs to the Fmt family. UDP-L-Ara4N formyltransferase subfamily. The protein in the C-terminal section; belongs to the NAD(P)-dependent epimerase/dehydratase family. UDP-glucuronic acid decarboxylase subfamily. In terms of assembly, homohexamer, formed by a dimer of trimers.

It catalyses the reaction UDP-alpha-D-glucuronate + NAD(+) = UDP-beta-L-threo-pentopyranos-4-ulose + CO2 + NADH. The catalysed reaction is UDP-4-amino-4-deoxy-beta-L-arabinose + (6R)-10-formyltetrahydrofolate = UDP-4-deoxy-4-formamido-beta-L-arabinose + (6S)-5,6,7,8-tetrahydrofolate + H(+). It participates in nucleotide-sugar biosynthesis; UDP-4-deoxy-4-formamido-beta-L-arabinose biosynthesis; UDP-4-deoxy-4-formamido-beta-L-arabinose from UDP-alpha-D-glucuronate: step 1/3. It functions in the pathway nucleotide-sugar biosynthesis; UDP-4-deoxy-4-formamido-beta-L-arabinose biosynthesis; UDP-4-deoxy-4-formamido-beta-L-arabinose from UDP-alpha-D-glucuronate: step 3/3. Its pathway is bacterial outer membrane biogenesis; lipopolysaccharide biosynthesis. Its function is as follows. Bifunctional enzyme that catalyzes the oxidative decarboxylation of UDP-glucuronic acid (UDP-GlcUA) to UDP-4-keto-arabinose (UDP-Ara4O) and the addition of a formyl group to UDP-4-amino-4-deoxy-L-arabinose (UDP-L-Ara4N) to form UDP-L-4-formamido-arabinose (UDP-L-Ara4FN). The modified arabinose is attached to lipid A and is required for resistance to polymyxin and cationic antimicrobial peptides. The sequence is that of Bifunctional polymyxin resistance protein ArnA from Salmonella paratyphi B (strain ATCC BAA-1250 / SPB7).